A 30-amino-acid chain; its full sequence is U5-ctenitoxin-Pk1b (30 aa).

Cystine bridges form between Cys-6/Cys-23 and Cys-13/Cys-29.

This sequence belongs to the neurotoxin 04 (omega-agtx) family. 02 (Tx1) subfamily. Expressed by the venom gland.

It localises to the secreted. Its function is as follows. Lethal neurotoxin. Causes spastic paralysis and death in mice in 4-6 minutes after intracerebroventricular injection at dose levels of 1.5 ug per mouse. In Phoneutria keyserlingi (Brazilian wandering spider), this protein is U5-ctenitoxin-Pk1b.